The chain runs to 996 residues: Alanine--tRNA ligase, chloroplastic/mitochondrial (996 aa).

Positions 677, 681, 779, and 783 each coordinate Zn(2+).

The protein belongs to the class-II aminoacyl-tRNA synthetase family. Monomer. Zn(2+) is required as a cofactor.

The protein localises to the plastid. It localises to the chloroplast. Its subcellular location is the mitochondrion. The catalysed reaction is tRNA(Ala) + L-alanine + ATP = L-alanyl-tRNA(Ala) + AMP + diphosphate. Functionally, catalyzes the attachment of alanine to tRNA(Ala) in a two-step reaction: alanine is first activated by ATP to form Ala-AMP and then transferred to the acceptor end of tRNA(Ala). Also edits incorrectly charged tRNA(Ala) via its editing domain. The protein is Alanine--tRNA ligase, chloroplastic/mitochondrial of Oryza sativa subsp. indica (Rice).